The primary structure comprises 590 residues: Leishmanolysin (590 aa).

A signal peptide spans methionine 1–alanine 39. A propeptide spans histidine 40–valine 87 (activation peptide). 2 cysteine pairs are disulfide-bonded: cysteine 112–cysteine 129 and cysteine 178–cysteine 217. Histidine 251 contacts Zn(2+). Glutamate 252 is an active-site residue. Residue histidine 255 coordinates Zn(2+). Asparagine 287 is a glycosylation site (N-linked (GlcNAc...) asparagine). Intrachain disulfides connect cysteine 301–cysteine 373, cysteine 380–cysteine 443, cysteine 393–cysteine 412, cysteine 402–cysteine 477, cysteine 454–cysteine 498, cysteine 503–cysteine 553, and cysteine 523–cysteine 546. A Zn(2+)-binding site is contributed by histidine 321. Residue asparagine 565 is the site of GPI-anchor amidated asparagine attachment. A propeptide spans alanine 566–leucine 590 (removed in mature form).

Belongs to the peptidase M8 family. Zn(2+) is required as a cofactor.

It localises to the cell membrane. It catalyses the reaction Preference for hydrophobic residues at P1 and P1' and basic residues at P2' and P3'. A model nonapeptide is cleaved at -Ala-Tyr-|-Leu-Lys-Lys-.. Functionally, has an integral role during the infection of macrophages in the mammalian host. The protein is Leishmanolysin (gp63) of Leishmania donovani.